A 491-amino-acid chain; its full sequence is Cobyric acid synthase (491 aa).

Residues 250 to 439 (EVTIAVIRLP…LHGIFDNGAW (190 aa)) enclose the GATase cobBQ-type domain. Cysteine 331 functions as the Nucleophile in the catalytic mechanism. The active site involves histidine 431.

This sequence belongs to the CobB/CobQ family. CobQ subfamily.

The protein operates within cofactor biosynthesis; adenosylcobalamin biosynthesis. Functionally, catalyzes amidations at positions B, D, E, and G on adenosylcobyrinic A,C-diamide. NH(2) groups are provided by glutamine, and one molecule of ATP is hydrogenolyzed for each amidation. The protein is Cobyric acid synthase of Synechococcus elongatus (strain ATCC 33912 / PCC 7942 / FACHB-805) (Anacystis nidulans R2).